We begin with the raw amino-acid sequence, 98 residues long: Integration host factor subunit alpha (98 aa).

Basic and acidic residues predominate over residues 53–69 (DLREKSERPGRNPKTGE). The tract at residues 53–73 (DLREKSERPGRNPKTGEDIPI) is disordered.

It belongs to the bacterial histone-like protein family. Heterodimer of an alpha and a beta chain.

Functionally, this protein is one of the two subunits of integration host factor, a specific DNA-binding protein that functions in genetic recombination as well as in transcriptional and translational control. This chain is Integration host factor subunit alpha, found in Aliivibrio fischeri (strain ATCC 700601 / ES114) (Vibrio fischeri).